The primary structure comprises 405 residues: Transcriptional regulatory protein DEP1 (405 aa).

Residues 1-12 (MSQQTPQESEQT) are compositionally biased toward low complexity. Disordered regions lie at residues 1 to 26 (MSQQ…SVLS) and 49 to 171 (AGTE…VMPS). At S56 the chain carries Phosphoserine. 2 stretches are compositionally biased toward basic and acidic residues: residues 86 to 108 (SLKR…KVPG) and 116 to 139 (EEEK…ARDE). A Phosphoserine modification is found at S120. Residues 140–157 (QGDEGDNEEENNEEDNEN) show a composition bias toward acidic residues. A Phosphoserine modification is found at S370.

In terms of assembly, component of the RPD3C(L) complex composed of at least ASH1, CTI6, DEP1, PHO23, RPD3, RXT2, RXT3, SAP30, SDS3, SIN3, UME1 and UME6.

Its subcellular location is the cytoplasm. It is found in the nucleus. In terms of biological role, component of the RPD3C(L) histone deacetylase complex (HDAC) responsible for the deacetylation of lysine residues on the N-terminal part of the core histones (H2A, H2B, H3 and H4). Histone deacetylation gives a tag for epigenetic repression and plays an important role in transcriptional regulation, cell cycle progression and developmental events. The polypeptide is Transcriptional regulatory protein DEP1 (DEP1) (Saccharomyces cerevisiae (strain ATCC 204508 / S288c) (Baker's yeast)).